We begin with the raw amino-acid sequence, 442 residues long: D-serine dehydratase 1 (442 aa).

Lysine 118 carries the post-translational modification N6-(pyridoxal phosphate)lysine.

This sequence belongs to the serine/threonine dehydratase family. DsdA subfamily. Monomer. Pyridoxal 5'-phosphate serves as cofactor.

The enzyme catalyses D-serine = pyruvate + NH4(+). In Escherichia coli (strain UTI89 / UPEC), this protein is D-serine dehydratase 1.